The sequence spans 597 residues: Elongation factor 4 (597 aa).

One can recognise a tr-type G domain in the interval 2 to 184; it reads KHIRNFSIIA…KIVSAIPAPE (183 aa). Residues 14–19 and 131–134 contribute to the GTP site; these read DHGKST and NKID.

This sequence belongs to the TRAFAC class translation factor GTPase superfamily. Classic translation factor GTPase family. LepA subfamily.

The protein localises to the cell inner membrane. The enzyme catalyses GTP + H2O = GDP + phosphate + H(+). Functionally, required for accurate and efficient protein synthesis under certain stress conditions. May act as a fidelity factor of the translation reaction, by catalyzing a one-codon backward translocation of tRNAs on improperly translocated ribosomes. Back-translocation proceeds from a post-translocation (POST) complex to a pre-translocation (PRE) complex, thus giving elongation factor G a second chance to translocate the tRNAs correctly. Binds to ribosomes in a GTP-dependent manner. The sequence is that of Elongation factor 4 from Vibrio vulnificus (strain CMCP6).